The primary structure comprises 159 residues: Ribosomal RNA large subunit methyltransferase H (159 aa).

S-adenosyl-L-methionine contacts are provided by residues L76, G108, and 127–132; that span reads FGLLTL.

It belongs to the RNA methyltransferase RlmH family. Homodimer.

It localises to the cytoplasm. It carries out the reaction pseudouridine(1915) in 23S rRNA + S-adenosyl-L-methionine = N(3)-methylpseudouridine(1915) in 23S rRNA + S-adenosyl-L-homocysteine + H(+). In terms of biological role, specifically methylates the pseudouridine at position 1915 (m3Psi1915) in 23S rRNA. The polypeptide is Ribosomal RNA large subunit methyltransferase H (Streptococcus agalactiae serotype Ia (strain ATCC 27591 / A909 / CDC SS700)).